Here is a 360-residue protein sequence, read N- to C-terminus: Phospho-N-acetylmuramoyl-pentapeptide-transferase (360 aa).

Transmembrane regions (helical) follow at residues 26 to 46 (AILG…KLIE), 74 to 94 (MGGL…GDLG), 97 to 117 (YVWV…IDDY), 134 to 154 (YILQ…TAAN), 168 to 188 (VMPQ…VGAS), 199 to 219 (GLAI…AYLS), 236 to 256 (SGEL…FLWF), 263 to 283 (VFMG…IAVL), 288 to 308 (ILLV…ILQV), and 338 to 358 (VIVR…ATLK).

This sequence belongs to the glycosyltransferase 4 family. MraY subfamily. Requires Mg(2+) as cofactor.

The protein localises to the cell inner membrane. The catalysed reaction is UDP-N-acetyl-alpha-D-muramoyl-L-alanyl-gamma-D-glutamyl-meso-2,6-diaminopimeloyl-D-alanyl-D-alanine + di-trans,octa-cis-undecaprenyl phosphate = di-trans,octa-cis-undecaprenyl diphospho-N-acetyl-alpha-D-muramoyl-L-alanyl-D-glutamyl-meso-2,6-diaminopimeloyl-D-alanyl-D-alanine + UMP. It participates in cell wall biogenesis; peptidoglycan biosynthesis. In terms of biological role, catalyzes the initial step of the lipid cycle reactions in the biosynthesis of the cell wall peptidoglycan: transfers peptidoglycan precursor phospho-MurNAc-pentapeptide from UDP-MurNAc-pentapeptide onto the lipid carrier undecaprenyl phosphate, yielding undecaprenyl-pyrophosphoryl-MurNAc-pentapeptide, known as lipid I. This chain is Phospho-N-acetylmuramoyl-pentapeptide-transferase, found in Shewanella baltica (strain OS185).